We begin with the raw amino-acid sequence, 89 residues long: Small ribosomal subunit protein uS15 (89 aa).

Belongs to the universal ribosomal protein uS15 family. As to quaternary structure, part of the 30S ribosomal subunit. Forms a bridge to the 50S subunit in the 70S ribosome, contacting the 23S rRNA.

In terms of biological role, one of the primary rRNA binding proteins, it binds directly to 16S rRNA where it helps nucleate assembly of the platform of the 30S subunit by binding and bridging several RNA helices of the 16S rRNA. Its function is as follows. Forms an intersubunit bridge (bridge B4) with the 23S rRNA of the 50S subunit in the ribosome. In Allorhizobium ampelinum (strain ATCC BAA-846 / DSM 112012 / S4) (Agrobacterium vitis (strain S4)), this protein is Small ribosomal subunit protein uS15.